Consider the following 222-residue polypeptide: MSKKLVLFCDFDGTITEKDNIVAIVRKFAPPEWEALTEQILSQKISVQEGVGKLFQLLPSSLRQDIIDFIVHEATIRPGFAEFVSYCREEGIELLITSGGIDFFLEPILAPFDLADVPIYCNGSDFSGERITITWPNACDEHCTNGCGMCKTTIIRRYDPATHFRIVIGDSITDLAGAKIADYVIARSFLADKAEELQLPHSTFATFHDVIRILQQVQQEVV.

It belongs to the HAD-like hydrolase superfamily. MtnX family.

It catalyses the reaction 2-hydroxy-5-methylsulfanyl-3-oxopent-1-enyl phosphate + H2O = 1,2-dihydroxy-5-(methylsulfanyl)pent-1-en-3-one + phosphate. Its pathway is amino-acid biosynthesis; L-methionine biosynthesis via salvage pathway; L-methionine from S-methyl-5-thio-alpha-D-ribose 1-phosphate: step 4/6. Functionally, dephosphorylates 2-hydroxy-3-keto-5-methylthiopentenyl-1-phosphate (HK-MTPenyl-1-P) yielding 1,2-dihydroxy-3-keto-5-methylthiopentene (DHK-MTPene). This is 2-hydroxy-3-keto-5-methylthiopentenyl-1-phosphate phosphatase from Brevibacillus brevis (strain 47 / JCM 6285 / NBRC 100599).